Here is a 348-residue protein sequence, read N- to C-terminus: RNA 3'-terminal phosphate cyclase (348 aa).

ATP is bound by residues Gln-102 and 285-288 (HMGD). The active-site Tele-AMP-histidine intermediate is the His-311.

It belongs to the RNA 3'-terminal cyclase family. Type 1 subfamily.

It localises to the cytoplasm. It catalyses the reaction a 3'-end 3'-phospho-ribonucleotide-RNA + ATP = a 3'-end 2',3'-cyclophospho-ribonucleotide-RNA + AMP + diphosphate. Its function is as follows. Catalyzes the conversion of 3'-phosphate to a 2',3'-cyclic phosphodiester at the end of RNA. The mechanism of action of the enzyme occurs in 3 steps: (A) adenylation of the enzyme by ATP; (B) transfer of adenylate to an RNA-N3'P to produce RNA-N3'PP5'A; (C) and attack of the adjacent 2'-hydroxyl on the 3'-phosphorus in the diester linkage to produce the cyclic end product. The biological role of this enzyme is unknown but it is likely to function in some aspects of cellular RNA processing. The sequence is that of RNA 3'-terminal phosphate cyclase from Korarchaeum cryptofilum (strain OPF8).